A 440-amino-acid chain; its full sequence is uncharacterized protein (440 aa).

A signal peptide spans 1-29 (MLRLQMMEGLIVKRTLLLILLLVISVSYA).

Belongs to the Mj S-layer protein family.

This is an uncharacterized protein from Methanocaldococcus jannaschii (strain ATCC 43067 / DSM 2661 / JAL-1 / JCM 10045 / NBRC 100440) (Methanococcus jannaschii).